The following is a 202-amino-acid chain: Probable septum site-determining protein MinC (202 aa).

Belongs to the MinC family. Interacts with MinD and FtsZ.

In terms of biological role, cell division inhibitor that blocks the formation of polar Z ring septums. Rapidly oscillates between the poles of the cell to destabilize FtsZ filaments that have formed before they mature into polar Z rings. Prevents FtsZ polymerization. The polypeptide is Probable septum site-determining protein MinC (Dictyoglomus turgidum (strain DSM 6724 / Z-1310)).